The sequence spans 151 residues: Protein NrdI (151 aa).

This sequence belongs to the NrdI family.

Probably involved in ribonucleotide reductase function. In Mycoplasmopsis pulmonis (strain UAB CTIP) (Mycoplasma pulmonis), this protein is Protein NrdI.